The sequence spans 395 residues: Synaptotagmin-8 (395 aa).

The Extracellular segment spans residues 1–44 (MQADRSMKMGHALNPFSTSAPLDATAGPSLIPDLITRIPWPRWT). Residues 45-65 (LFIAILAAGVLLVSCLLCVIC) form a helical; Signal-anchor for type III membrane protein membrane-spanning segment. Residues 66 to 395 (CYCHRHRHRK…PRLPLLRPRS (330 aa)) lie on the Cytoplasmic side of the membrane. C2 domains follow at residues 113–229 (QWGR…ESWY) and 241–370 (QMGE…AQWH).

It belongs to the synaptotagmin family. As to quaternary structure, homodimer or homooligomer. Homodimerization and homooligomerization do not depend on Ca(2+). Interacts with SYNCRIP isoform 2 C-terminus. Binds inositol 1,3,4,5-tetrakisphosphate (IP4). Binds to AP2 in a Ca(2+)-independent manner. Interacts with STX1A, STX1B and STX2; the interaction is Ca(2+)-dependent. Ubiquitous. Detected in testis and brain. Expressed in primary neurons, neuroendocrine and endocrine cells.

Its subcellular location is the cytoplasm. The protein localises to the cell membrane. The protein resides in the cytoplasmic vesicle. It localises to the secretory vesicle. It is found in the acrosome. Functionally, involved in the trafficking and exocytosis of secretory vesicles in non-neuronal tissues. Mediates Ca(2+)-regulation of exocytosis acrosomal reaction in sperm. May mediate Ca(2+)-regulation of exocytosis in insulin secreted cells. The chain is Synaptotagmin-8 (Syt8) from Mus musculus (Mouse).